A 339-amino-acid chain; its full sequence is Ornithine carbamoyltransferase, catabolic (339 aa).

Residues 57-60 (STRT), Gln-84, Arg-108, and 135-138 (HPTQ) contribute to the carbamoyl phosphate site. L-ornithine-binding positions include Asn-167, Asp-231, and 235 to 236 (SM). Carbamoyl phosphate-binding positions include 274–275 (CL) and Arg-319.

The protein belongs to the aspartate/ornithine carbamoyltransferase superfamily. OTCase family.

Its subcellular location is the cytoplasm. It carries out the reaction carbamoyl phosphate + L-ornithine = L-citrulline + phosphate + H(+). It participates in amino-acid degradation; L-arginine degradation via ADI pathway; carbamoyl phosphate from L-arginine: step 2/2. Reversibly catalyzes the transfer of the carbamoyl group from carbamoyl phosphate (CP) to the N(epsilon) atom of ornithine (ORN) to produce L-citrulline. The sequence is that of Ornithine carbamoyltransferase, catabolic (arcB) from Enterococcus faecalis (strain ATCC 700802 / V583).